The chain runs to 127 residues: Protein ApaG (127 aa).

Residues 3–127 (DDPRYRVEVE…FVLSVPRTLH (125 aa)) form the ApaG domain.

The sequence is that of Protein ApaG from Xanthomonas oryzae pv. oryzae (strain MAFF 311018).